The sequence spans 292 residues: Homoserine kinase (292 aa).

84 to 94 (PLSRGLGSSSA) lines the ATP pocket.

Belongs to the GHMP kinase family. Homoserine kinase subfamily.

Its subcellular location is the cytoplasm. The catalysed reaction is L-homoserine + ATP = O-phospho-L-homoserine + ADP + H(+). The protein operates within amino-acid biosynthesis; L-threonine biosynthesis; L-threonine from L-aspartate: step 4/5. Its function is as follows. Catalyzes the ATP-dependent phosphorylation of L-homoserine to L-homoserine phosphate. This Campylobacter jejuni subsp. jejuni serotype O:6 (strain 81116 / NCTC 11828) protein is Homoserine kinase.